The sequence spans 843 residues: Proto-oncogene vav (843 aa).

Residues 1 to 119 (MELWRQCTHW…YTLSALSWTP (119 aa)) form the Calponin-homology (CH) domain. Positions 194–373 (KRCCCLREIQ…RDLAQCVNEV (180 aa)) constitute a DH domain. In terms of domain architecture, PH spans 402–504 (RPKIDGELKI…WMEQFEMAIS (103 aa)). The Phorbol-ester/DAG-type zinc finger occupies 515 to 564 (GHDFQMFSFEETTSCKACQMLLRGTFYQGYRCYRCRAPAHKECLGRVPPC). Residues 590–658 (LGLPKMEVCQ…PCNRVRPYVH (69 aa)) enclose the SH3 1 domain. In terms of domain architecture, SH2 spans 669–763 (WYAGPMERAG…SLDTTLQFPY (95 aa)). In terms of domain architecture, SH3 2 spans 780-840 (KYFGTAKARY…PSNYVEEDYS (61 aa)). Residues tyrosine 824 and tyrosine 842 each carry the phosphotyrosine modification.

In terms of assembly, interacts with SHB. Interacts with APS, DOCK2, GRB2, GRB3, DOCK2, SLA, TEC and ZNF655/VIK. Interacts with SIAH2; without leading to its degradation. Associates with BLNK, PLCG1, GRB2 and NCK1 in a B-cell antigen receptor-dependent fashion. Interacts with CBLB; which inhibits tyrosine phosphorylation and down-regulates activity. May interact with CCPG1. Interacts with CLNK. Interacts with THEMIS2. Interacts with NEK3 and this interaction is prolactin-dependent. Interacts with ITK. Interacts with PTK2B/PYK2. Interacts with HCK. Interacts with PTK2B/PYK2. Interacts (via SH2 domain) with SYK. Interacts with ANKRD54. Interacts with CD6. Interacts with LCP2; this interaction plays a role in TCR-mediated cytokine production. Phosphorylated by FYN. Phosphorylated on tyrosine residues by HCK in response to IFNG and bacterial lipopolysaccharide (LPS).

In terms of biological role, couples tyrosine kinase signals with the activation of the Rho/Rac GTPases, thus leading to cell differentiation and/or proliferation. The chain is Proto-oncogene vav (Vav1) from Rattus norvegicus (Rat).